The chain runs to 699 residues: SPS-sensor serine protease component SSY5 (699 aa).

2 disordered regions span residues 1–113 and 129–158; these read MVRF…LQGF and VKEE…GNAR. Residues 1–381 constitute a propeptide that is removed on maturation; it reads MVRFFGLNKK…YCVKDYIKKA (381 aa). Polar residues predominate over residues 24-38; it reads NEQNAAETSSSNVSG. Residues 39–51 are compositionally biased toward basic and acidic residues; that stretch reads NEERIDPNSHDAN. Low complexity predominate over residues 52–78; the sequence is PENANNDDASTTFGSSIQSSSIFSRGR. The segment covering 83-93 has biased composition (polar residues); it reads TGASSSMATSE. 2 stretches are compositionally biased toward low complexity: residues 97–109 and 144–154; these read HSSG…NSKN and SSSTSSTLATS. The tract at residues 459–699 is serine protease; the sequence is FAITCAHVVL…QWDIDPQLDG (241 aa). Residues His-465, Asp-545, and Ser-640 each act as charge relay system in the active site.

It belongs to the peptidase S64 family. Component of the plasma membrane SPS (SSY1-PTR3-SSY5) amino acid sensor complex. In terms of processing, the propeptide is autoproteolytically cleaved from the catalytic domain but remains associated, forming an inactive protease complex. This processing occurs even in the absence of signaling.

It is found in the cell membrane. Its function is as follows. Protease component of the SPS-sensor system, which regulates the expression of several amino acid-metabolizing enzymes and amino acid- and peptide-permeases in response to extracellular amino acid levels by controlling the activity of two transcription factors, STP1 and STP2. Catalyzes the activation of these transcription factors, which are synthesized as latent cytoplasmic precursors, by proteolytic removal of an N-terminal inhibitory domain containing cytoplasmic retention motifs. SSY5 binds as an inactive protease complex to STP1. In response to extracellular amino acids and dependent on the other SPS-sensor components, the inhibitory propeptide is induced to dissociate, and thereby enables the catalytic domain to process STP1. This is SPS-sensor serine protease component SSY5 (SSY5) from Saccharomyces cerevisiae (strain YJM789) (Baker's yeast).